The chain runs to 316 residues: 4-hydroxy-3-methylbut-2-enyl diphosphate reductase (316 aa).

C12 contributes to the [4Fe-4S] cluster binding site. H43 and H81 together coordinate (2E)-4-hydroxy-3-methylbut-2-enyl diphosphate. Dimethylallyl diphosphate is bound by residues H43 and H81. Positions 43 and 81 each coordinate isopentenyl diphosphate. C103 is a [4Fe-4S] cluster binding site. Residue H131 participates in (2E)-4-hydroxy-3-methylbut-2-enyl diphosphate binding. H131 is a binding site for dimethylallyl diphosphate. H131 is an isopentenyl diphosphate binding site. The Proton donor role is filled by E133. T170 provides a ligand contact to (2E)-4-hydroxy-3-methylbut-2-enyl diphosphate. C198 is a binding site for [4Fe-4S] cluster. (2E)-4-hydroxy-3-methylbut-2-enyl diphosphate-binding residues include S226, N228, and S271. Positions 226, 228, and 271 each coordinate dimethylallyl diphosphate. Residues S226, N228, and S271 each contribute to the isopentenyl diphosphate site.

Belongs to the IspH family. [4Fe-4S] cluster serves as cofactor.

It carries out the reaction isopentenyl diphosphate + 2 oxidized [2Fe-2S]-[ferredoxin] + H2O = (2E)-4-hydroxy-3-methylbut-2-enyl diphosphate + 2 reduced [2Fe-2S]-[ferredoxin] + 2 H(+). The catalysed reaction is dimethylallyl diphosphate + 2 oxidized [2Fe-2S]-[ferredoxin] + H2O = (2E)-4-hydroxy-3-methylbut-2-enyl diphosphate + 2 reduced [2Fe-2S]-[ferredoxin] + 2 H(+). It functions in the pathway isoprenoid biosynthesis; dimethylallyl diphosphate biosynthesis; dimethylallyl diphosphate from (2E)-4-hydroxy-3-methylbutenyl diphosphate: step 1/1. It participates in isoprenoid biosynthesis; isopentenyl diphosphate biosynthesis via DXP pathway; isopentenyl diphosphate from 1-deoxy-D-xylulose 5-phosphate: step 6/6. Functionally, catalyzes the conversion of 1-hydroxy-2-methyl-2-(E)-butenyl 4-diphosphate (HMBPP) into a mixture of isopentenyl diphosphate (IPP) and dimethylallyl diphosphate (DMAPP). Acts in the terminal step of the DOXP/MEP pathway for isoprenoid precursor biosynthesis. The sequence is that of 4-hydroxy-3-methylbut-2-enyl diphosphate reductase from Geobacillus kaustophilus (strain HTA426).